The chain runs to 396 residues: Elongation factor Tu 2 (396 aa).

The tr-type G domain occupies 10-206 (KLHVNVGTIG…ALDTFIPDPT (197 aa)). The segment at 19 to 26 (GHVDHGKT) is G1. GTP is bound at residue 19 to 26 (GHVDHGKT). Thr26 is a binding site for Mg(2+). Positions 60–64 (GITIS) are G2. The interval 81 to 84 (DCPG) is G3. GTP-binding positions include 81–85 (DCPGH) and 136–139 (NKAD). Positions 136–139 (NKAD) are G4. Positions 174–176 (SAR) are G5.

This sequence belongs to the TRAFAC class translation factor GTPase superfamily. Classic translation factor GTPase family. EF-Tu/EF-1A subfamily. As to quaternary structure, monomer.

Its subcellular location is the cytoplasm. It catalyses the reaction GTP + H2O = GDP + phosphate + H(+). In terms of biological role, GTP hydrolase that promotes the GTP-dependent binding of aminoacyl-tRNA to the A-site of ribosomes during protein biosynthesis. This is Elongation factor Tu 2 from Xanthomonas campestris pv. campestris (strain 8004).